The primary structure comprises 347 residues: Ceramide very long chain fatty acid hydroxylase scs7 (347 aa).

The Cytoplasmic portion of the chain corresponds to 1 to 156; sequence MASVTSEKCV…GNFLEPLTKT (156 aa). A helical transmembrane segment spans residues 157–177; the sequence is PWYMIPLIWVPCVTYGFLYAC. A topological domain (lumenal) is located at residue Thr178. A helical membrane pass occupies residues 179 to 199; the sequence is GIPFSVAITFFIIGLFTWTLV. Residues 200–238 lie on the Cytoplasmic side of the membrane; sequence EYTMHRFLFHLDEYTPDHPIFLTMHFAFHGCHHFLPADK. Zn(2+) is bound by residues His204, His209, His228, His231, and His232. Residues 239 to 259 traverse the membrane as a helical segment; that stretch reads YRLVMPPALFLIFATPWYHFI. A topological domain (lumenal) is located at residue Gln260. The chain crosses the membrane as a helical span at residues 261-281; it reads LVLPHYIGVAGFSGAILGYVF. The Cytoplasmic portion of the chain corresponds to 282 to 347; sequence YDLTHYFLHH…EQGKISTKAK (66 aa). 5 residues coordinate Zn(2+): His286, His290, His306, His309, and His310.

Belongs to the sterol desaturase family. SCS7 subfamily. Zn(2+) serves as cofactor.

The protein resides in the endoplasmic reticulum membrane. The protein operates within sphingolipid metabolism. In terms of biological role, ceramide hydroxylase involved in the hydroxylation of sphingolipid-associated very long chain fatty acids. Postulated to hydroxylate the very long chain fatty acid of dihydroceramides and phytoceramides at C-2. The polypeptide is Ceramide very long chain fatty acid hydroxylase scs7 (Schizosaccharomyces pombe (strain 972 / ATCC 24843) (Fission yeast)).